The primary structure comprises 312 residues: Pantothenate kinase (312 aa).

97–104 (GSVAVGKS) is a binding site for ATP.

The protein belongs to the prokaryotic pantothenate kinase family.

It is found in the cytoplasm. The catalysed reaction is (R)-pantothenate + ATP = (R)-4'-phosphopantothenate + ADP + H(+). It participates in cofactor biosynthesis; coenzyme A biosynthesis; CoA from (R)-pantothenate: step 1/5. The polypeptide is Pantothenate kinase (Corynebacterium glutamicum (strain ATCC 13032 / DSM 20300 / JCM 1318 / BCRC 11384 / CCUG 27702 / LMG 3730 / NBRC 12168 / NCIMB 10025 / NRRL B-2784 / 534)).